The sequence spans 408 residues: Na(+)-translocating NADH-quinone reductase subunit F (408 aa).

A helical membrane pass occupies residues 4–24 (IYLGVGMFTIIVLVLVAIIMF). The 2Fe-2S ferredoxin-type domain maps to 33 to 127 (GDVEILINDD…DMEIELPEEV (95 aa)). The [2Fe-2S] cluster site is built by C70, C76, C79, and C111. One can recognise an FAD-binding FR-type domain in the interval 130-270 (IRKWDCTVKS…SGPFGEFFAK (141 aa)).

The protein belongs to the NqrF family. Composed of six subunits; NqrA, NqrB, NqrC, NqrD, NqrE and NqrF. [2Fe-2S] cluster serves as cofactor. FAD is required as a cofactor.

It is found in the cell inner membrane. The catalysed reaction is a ubiquinone + n Na(+)(in) + NADH + H(+) = a ubiquinol + n Na(+)(out) + NAD(+). In terms of biological role, NQR complex catalyzes the reduction of ubiquinone-1 to ubiquinol by two successive reactions, coupled with the transport of Na(+) ions from the cytoplasm to the periplasm. The first step is catalyzed by NqrF, which accepts electrons from NADH and reduces ubiquinone-1 to ubisemiquinone by a one-electron transfer pathway. This Idiomarina loihiensis (strain ATCC BAA-735 / DSM 15497 / L2-TR) protein is Na(+)-translocating NADH-quinone reductase subunit F.